Here is a 203-residue protein sequence, read N- to C-terminus: Xrcc4-like factor 1 (203 aa).

It belongs to the XRCC4-XLF family. XLF subfamily.

It is found in the nucleus. In terms of biological role, involved in double-strand break repair via non-homologous end joining (NHEJ); the repair of a double-strand break in DNA in which the two broken ends are rejoined with little or no sequence complementarity. Has a role in meiosis. This chain is Xrcc4-like factor 1 (xlf1), found in Schizosaccharomyces pombe (strain 972 / ATCC 24843) (Fission yeast).